Consider the following 342-residue polypeptide: Glycerol-3-phosphate dehydrogenase [NAD(P)+] (342 aa).

The NADPH site is built by Trp11, Arg31, and Lys102. Positions 102 and 132 each coordinate sn-glycerol 3-phosphate. Ala136 contributes to the NADPH binding site. Lys187, Asp240, Ser250, Arg251, and Asn252 together coordinate sn-glycerol 3-phosphate. Lys187 serves as the catalytic Proton acceptor. Residue Arg251 coordinates NADPH. Glu277 provides a ligand contact to NADPH.

The protein belongs to the NAD-dependent glycerol-3-phosphate dehydrogenase family.

It is found in the cytoplasm. The catalysed reaction is sn-glycerol 3-phosphate + NAD(+) = dihydroxyacetone phosphate + NADH + H(+). The enzyme catalyses sn-glycerol 3-phosphate + NADP(+) = dihydroxyacetone phosphate + NADPH + H(+). It functions in the pathway membrane lipid metabolism; glycerophospholipid metabolism. Catalyzes the reduction of the glycolytic intermediate dihydroxyacetone phosphate (DHAP) to sn-glycerol 3-phosphate (G3P), the key precursor for phospholipid synthesis. This Symbiobacterium thermophilum (strain DSM 24528 / JCM 14929 / IAM 14863 / T) protein is Glycerol-3-phosphate dehydrogenase [NAD(P)+].